A 77-amino-acid polypeptide reads, in one-letter code: Acyl carrier protein (77 aa).

The 76-residue stretch at 1–76 folds into the Carrier domain; that stretch reads MADFEKVKSI…DVTKFIDNLK (76 aa). S36 is modified (O-(pantetheine 4'-phosphoryl)serine).

The protein belongs to the acyl carrier protein (ACP) family. In terms of processing, 4'-phosphopantetheine is transferred from CoA to a specific serine of apo-ACP by AcpS. This modification is essential for activity because fatty acids are bound in thioester linkage to the sulfhydryl of the prosthetic group.

The protein resides in the cytoplasm. It functions in the pathway lipid metabolism; fatty acid biosynthesis. Functionally, carrier of the growing fatty acid chain in fatty acid biosynthesis. In Leptospira borgpetersenii serovar Hardjo-bovis (strain JB197), this protein is Acyl carrier protein.